Consider the following 196-residue polypeptide: Large ribosomal subunit protein eL15 (196 aa).

Composition is skewed to basic residues over residues 160 to 172 and 186 to 196; these read ATRG…RKGR and PSIRAHKSRGK. The segment at 160–196 is disordered; the sequence is ATRGKTSAGRKGRGMSTRGKGTEKTRPSIRAHKSRGK.

This sequence belongs to the eukaryotic ribosomal protein eL15 family.

The chain is Large ribosomal subunit protein eL15 (rpl15e) from Methanosarcina mazei (strain ATCC BAA-159 / DSM 3647 / Goe1 / Go1 / JCM 11833 / OCM 88) (Methanosarcina frisia).